The primary structure comprises 304 residues: Ribonuclease BN (304 aa).

Positions 63, 65, 67, 68, 140, 211, and 269 each coordinate Zn(2+). Residue Asp-67 is the Proton acceptor of the active site.

The protein belongs to the RNase Z family. RNase BN subfamily. Homodimer. Zn(2+) is required as a cofactor.

In terms of biological role, zinc phosphodiesterase, which has both exoribonuclease and endoribonuclease activities. The polypeptide is Ribonuclease BN (Cronobacter sakazakii (strain ATCC BAA-894) (Enterobacter sakazakii)).